The following is a 93-amino-acid chain: Small ribosomal subunit protein uS19 (93 aa).

This sequence belongs to the universal ribosomal protein uS19 family.

In terms of biological role, protein S19 forms a complex with S13 that binds strongly to the 16S ribosomal RNA. The chain is Small ribosomal subunit protein uS19 from Karelsulcia muelleri (strain GWSS) (Sulcia muelleri).